The sequence spans 344 residues: Ferrochelatase (344 aa).

Residues His-191 and Glu-271 each coordinate Fe cation.

It belongs to the ferrochelatase family.

It is found in the cytoplasm. It catalyses the reaction heme b + 2 H(+) = protoporphyrin IX + Fe(2+). The protein operates within porphyrin-containing compound metabolism; protoheme biosynthesis; protoheme from protoporphyrin-IX: step 1/1. Catalyzes the ferrous insertion into protoporphyrin IX. The sequence is that of Ferrochelatase from Pelagibacter ubique (strain HTCC1062).